The following is a 118-amino-acid chain: UPF0102 protein DICTH_1420 (118 aa).

The protein belongs to the UPF0102 family.

The chain is UPF0102 protein DICTH_1420 from Dictyoglomus thermophilum (strain ATCC 35947 / DSM 3960 / H-6-12).